Consider the following 1856-residue polypeptide: MIPQWIPQNIQKRLLLYVLQQLSLFSEIDLPNLEEVSLNNIILKDVALDPEKVGKLPGCNLRYGQIGSLELTTISGISGVNIDVNDAEIVISPDFDIDENMTNQVAFSLAQSTANLANTIMLNTNDGSDMNETSDPASEDDDEDDIDDKITKPIPPKRRTSSVTGNKTTALGGVMQKAVEIALSRLSIKVNSLKIKIVSDLTDLQMEVDSVSINSTNGTRTVSIKGVKLRTLKPNVNPGEGFQSGHAPQKKQQGSDNDSPTDANKHGSENDNDDDDDDYGNESLMDSMVFSHEEASSIYMSATSRSFEKSAASGIPGEVDNKATDKEDYSEDPPIIFYMDDCTIEFDGLSTISNLEIEVGNINLAFTPLTPTLVSIFQGVAKSLKIKYYQQKKKTKSRSAQRNEKFPQYTNDNDEIPEDQSESDDASHEPFFNRFKVNSFVISATSALSENGLFANKNGINIIFFNINIKQKNELLLYGGVETFKIIRFEDDNTYEIFHFDKPQSAPSSAPSYSGSNDVAGTSSSLSSSTGSATSKADIRFEVFKKSEESDDLEVTVLMAKSAHFNFDLQSLLILSNFAKAVSSIYDEYGLLKSVIDKLDTRDKKWSGGTNNSKMSSKSEFILQTATIFVNFIISDDCQLQLIVFPIKFNLRQEQLTISKILLNCTNGDTQVEGVIILTDVSLITKNQEFRAYFQSTNTTTSANTHPLPRKTTMNSKLSVIVQKFSSNVSMDRLKFIGEKLKNFSNEFIERSPTQSNSLENSFLNEPVERQRLESSLHMNSSLFSTRRPGRRLGLGFNNSPSVFLGSTRVTMASFQVCFKEATFNITGVFPKFGNFSVQMSDISFYKLKNDILGHILSVSVQRKKGDLVENLIHQYQDLSPNSLEFPLLSIKCKLGDKTTKIEITARNLVLEYYTNWLLLMDKEESIIDAVEEEIIEKVTPSQHSSSQNKLDIRYSMYDCMVGLTPGRLSCKSYLIIGKGDSDISFGVDQFYVKCSFRNISMVLIDDTKNILPFSEPSTSSSSSSSSATRQTPYVYIQPLDYYSKLGYIHLGLINVAHVGITFNTDIEALKDRNEKLGIKDSLTFVDLKTNLDECQFNLCADTANTLIQLVNDLKLPLNFKDEDKMKVDFADGINVMQGIDQNIFKGLTETLTELNLNGTENGSTSESSSQEASSLMFEEGHFDRGNRSLYDNSHVDPLHININLSKVKIYLHDGYDWKDTRKAIRGAVKNFETAQTAKTVAKEKEKKRKVEFETRDIEVQEDVFQETLFQSIHVVAPRNQNARDMATSINLDLQNDKDGESRDVSTANSGKSYKNLKLRRSAKHKLLFDLKSIEVGVNVYSTRDPRRDKTDENMKYELLNFIELRVGTVDIYDNVSTSTWNKFLSYMNILGDREIGTSMVKVSILNVRPDPAMVSGEAIMNVSVLPLRLHIDQDALDFLVRFFEFKDERFELPPDEMVYIQKFEISSIKLKLDYKPKKVDYAGLRSGKAGEFANFFTLDGSTLTLPKVKLFGIPGAPKIGIGLGRAWLPVFQSTQVIGIISGVSPLRSVVNIGGGFKDLVAIPISEYKKDGRLWRSIQKGTVSFAKTTGYEILNLGVKLASGTQVLLEQGEEMLGGEGSSVRSPNLGGSDNRRNSNASDELPVEVAKPKSQNNLLVSSQILNKASTKIETHSYDTKKLYSNIELDDEDMDDNRINGINKELLSKSIFLLAPAEEKLAKLQPHTKGNHEGLTEEEEDEDEDEEYQLYAYENEEELQEKLVSLYSNQPETIEQGLKSAYKSLGTNFKLTKKQLLKLRRELAETDTIQDSMVTVLKNSPIILMRPLIGSTEAVSKLLMGVGNQIDGKKLVEKKDKYPT.

Disordered stretches follow at residues 123 to 167 (NTND…TGNK), 229 to 283 (LRTL…GNES), 309 to 328 (KSAA…DKED), 395 to 428 (TKSR…DASH), 1157 to 1177 (LNGT…SSLM), 1614 to 1647 (MLGG…VEVA), and 1719 to 1741 (KLQP…EDED). Over residues 137-147 (ASEDDDEDDID) the composition is skewed to acidic residues. The segment covering 250 to 262 (KKQQGSDNDSPTD) has biased composition (polar residues). Positions 270–280 (NDNDDDDDDYG) are enriched in acidic residues. Positions 412-424 (DNDEIPEDQSESD) are enriched in acidic residues. Low complexity predominate over residues 1157 to 1170 (LNGTENGSTSESSS). Residues 1621–1639 (SVRSPNLGGSDNRRNSNAS) are compositionally biased toward polar residues. A compositionally biased stretch (acidic residues) spans 1732–1741 (TEEEEDEDED).

It belongs to the ATG2 family.

The protein resides in the preautophagosomal structure membrane. It localises to the endoplasmic reticulum membrane. The catalysed reaction is a 1,2-diacyl-sn-glycero-3-phosphocholine(in) = a 1,2-diacyl-sn-glycero-3-phosphocholine(out). It carries out the reaction a 1,2-diacyl-sn-glycero-3-phospho-L-serine(in) = a 1,2-diacyl-sn-glycero-3-phospho-L-serine(out). It catalyses the reaction a 1,2-diacyl-sn-glycero-3-phosphoethanolamine(in) = a 1,2-diacyl-sn-glycero-3-phosphoethanolamine(out). Lipid transfer protein required for autophagosome completion and peroxisome degradation. Tethers the edge of the isolation membrane (IM) to the endoplasmic reticulum (ER) and mediates direct lipid transfer from ER to IM for IM expansion. ATG2/SPO72 binds to the ER exit site (ERES), which is the membrane source for autophagosome formation, using basic residues in its N-terminal region (NR) and to the expanding edge of the IM through its C-terminal region. The latter binding is assisted by an ATG18-PtdIns3P interaction. ATG2/SPO72 then extracts phospholipids from the membrane source using its NR and transfers them to ATG9 to the IM through its predicted beta-sheet-rich structure for membrane expansion. In Candida albicans (strain SC5314 / ATCC MYA-2876) (Yeast), this protein is Autophagy-related protein 2 (SPO72).